Consider the following 440-residue polypeptide: Thymidine phosphorylase (440 aa).

The protein belongs to the thymidine/pyrimidine-nucleoside phosphorylase family. In terms of assembly, homodimer.

The enzyme catalyses thymidine + phosphate = 2-deoxy-alpha-D-ribose 1-phosphate + thymine. It participates in pyrimidine metabolism; dTMP biosynthesis via salvage pathway; dTMP from thymine: step 1/2. In terms of biological role, the enzymes which catalyze the reversible phosphorolysis of pyrimidine nucleosides are involved in the degradation of these compounds and in their utilization as carbon and energy sources, or in the rescue of pyrimidine bases for nucleotide synthesis. The protein is Thymidine phosphorylase of Salmonella choleraesuis (strain SC-B67).